A 259-amino-acid polypeptide reads, in one-letter code: Hydroxyacylglutathione hydrolase (259 aa).

Zn(2+)-binding residues include His-56, His-58, Asp-60, His-61, His-112, Asp-133, and His-171. The segment at 220 to 243 (NPFLRTGETSVKEKADERSDAQNT) is disordered. The span at 229–239 (SVKEKADERSD) shows a compositional bias: basic and acidic residues.

It belongs to the metallo-beta-lactamase superfamily. Glyoxalase II family. In terms of assembly, monomer. Zn(2+) is required as a cofactor.

The enzyme catalyses an S-(2-hydroxyacyl)glutathione + H2O = a 2-hydroxy carboxylate + glutathione + H(+). Its pathway is secondary metabolite metabolism; methylglyoxal degradation; (R)-lactate from methylglyoxal: step 2/2. In terms of biological role, thiolesterase that catalyzes the hydrolysis of S-D-lactoyl-glutathione to form glutathione and D-lactic acid. The polypeptide is Hydroxyacylglutathione hydrolase (Pseudomonas syringae pv. syringae (strain B728a)).